We begin with the raw amino-acid sequence, 785 residues long: Phenylalanine--tRNA ligase beta subunit (785 aa).

Positions 39–147 (FPIPRGVVFA…DALPPGTPLS (109 aa)) constitute a tRNA-binding domain. Residues 399-474 (KPPEAIPFRP…RIQGYETIPL (76 aa)) enclose the B5 domain. Mg(2+) contacts are provided by Asp452, Asp458, Glu461, and Glu462. One can recognise an FDX-ACB domain in the interval 688–780 (SRHPAAFRDL…ALRARGFGLR (93 aa)).

This sequence belongs to the phenylalanyl-tRNA synthetase beta subunit family. Type 1 subfamily. Tetramer of two alpha and two beta subunits. Mg(2+) serves as cofactor.

The protein localises to the cytoplasm. The catalysed reaction is tRNA(Phe) + L-phenylalanine + ATP = L-phenylalanyl-tRNA(Phe) + AMP + diphosphate + H(+). The chain is Phenylalanine--tRNA ligase beta subunit (pheT) from Thermus thermophilus (strain ATCC 27634 / DSM 579 / HB8).